Reading from the N-terminus, the 445-residue chain is MREIVHIQAGQCGNQIGAKFWEVISDEHGIDPTGSYHGDSDLQLERINVYYNEAAGNKYVPRAILVDLEPGTMDSVRSGPFGQIFRPDNFVFGQSGAGNNWAKGHYTEGAELVDSVLDVVRKESESCDCLQGFQLTHSLGGGTGSGMGTLLISKIREEYPDRIMNTFSVMPSPKVSDTVVEPYNATVSVHQLVENTDETYCIDNEALYDICFRTLKLTTPTYGDLNHLVSATMSGVTTCLRFPGQLNADLRKLAVNMVPFPRLHFFMPGFAPLTSRGSQQYRALTVPELTQQMFDSKNMMAACDPRHGRYLTVAAIFRGRMSMKEVDEQMLNVQNKNSSYFVEWIPNNVKTAVCDIPPRGLKMSATFIGNSTAIQELFKRISEQFTAMFRRKAFLHWYTGEGMDEMEFTEAESNMNDLVSEYQQYQDATADEQGEFEEEGEEDEA.

The MREI motif signature appears at 1-4 (MREI). Glutamine 11, glutamate 69, serine 138, glycine 142, threonine 143, glycine 144, asparagine 204, and asparagine 226 together coordinate GTP. Glutamate 69 provides a ligand contact to Mg(2+). The segment at 424 to 445 (QYQDATADEQGEFEEEGEEDEA) is disordered. Over residues 429–445 (TADEQGEFEEEGEEDEA) the composition is skewed to acidic residues. Glutamate 438 carries the post-translational modification 5-glutamyl polyglutamate.

This sequence belongs to the tubulin family. As to quaternary structure, dimer of alpha and beta chains. A typical microtubule is a hollow water-filled tube with an outer diameter of 25 nm and an inner diameter of 15 nM. Alpha-beta heterodimers associate head-to-tail to form protofilaments running lengthwise along the microtubule wall with the beta-tubulin subunit facing the microtubule plus end conferring a structural polarity. Microtubules usually have 13 protofilaments but different protofilament numbers can be found in some organisms and specialized cells. It depends on Mg(2+) as a cofactor. Post-translationally, some glutamate residues at the C-terminus are polyglycylated, resulting in polyglycine chains on the gamma-carboxyl group. Glycylation is mainly limited to tubulin incorporated into axonemes (cilia and flagella) whereas glutamylation is prevalent in neuronal cells, centrioles, axonemes, and the mitotic spindle. Both modifications can coexist on the same protein on adjacent residues, and lowering polyglycylation levels increases polyglutamylation, and reciprocally. The precise function of polyglycylation is still unclear. In terms of processing, some glutamate residues at the C-terminus are polyglutamylated, resulting in polyglutamate chains on the gamma-carboxyl group. Polyglutamylation plays a key role in microtubule severing by spastin (SPAST). SPAST preferentially recognizes and acts on microtubules decorated with short polyglutamate tails: severing activity by SPAST increases as the number of glutamates per tubulin rises from one to eight, but decreases beyond this glutamylation threshold. In terms of tissue distribution, highly expressed in skeletal muscle.

The protein resides in the cytoplasm. The protein localises to the cytoskeleton. In terms of biological role, tubulin is the major constituent of microtubules, a cylinder consisting of laterally associated linear protofilaments composed of alpha- and beta-tubulin heterodimers. Microtubules grow by the addition of GTP-tubulin dimers to the microtubule end, where a stabilizing cap forms. Below the cap, tubulin dimers are in GDP-bound state, owing to GTPase activity of alpha-tubulin. In Gallus gallus (Chicken), this protein is Tubulin beta-1 chain.